Here is a 133-residue protein sequence, read N- to C-terminus: Sec-independent protein translocase protein TatB (133 aa).

The helical transmembrane segment at 1–21 (MFDIGFWELVLIAIVALVVLG) threads the bilayer. The interval 67–133 (EQMGMQNLSP…ASQPAEKKAE (67 aa)) is disordered. The span at 70 to 84 (GMQNLSPELQKSVES) shows a compositional bias: polar residues. Residues 97–116 (AATPSSEASSTSSNPSSATE) are compositionally biased toward low complexity.

This sequence belongs to the TatB family. As to quaternary structure, the Tat system comprises two distinct complexes: a TatABC complex, containing multiple copies of TatA, TatB and TatC subunits, and a separate TatA complex, containing only TatA subunits. Substrates initially bind to the TatABC complex, which probably triggers association of the separate TatA complex to form the active translocon.

The protein localises to the cell inner membrane. In terms of biological role, part of the twin-arginine translocation (Tat) system that transports large folded proteins containing a characteristic twin-arginine motif in their signal peptide across membranes. Together with TatC, TatB is part of a receptor directly interacting with Tat signal peptides. TatB may form an oligomeric binding site that transiently accommodates folded Tat precursor proteins before their translocation. This is Sec-independent protein translocase protein TatB from Vibrio cholerae serotype O1 (strain ATCC 39315 / El Tor Inaba N16961).